Here is a 332-residue protein sequence, read N- to C-terminus: UDP-galactose/UDP-glucose transporter 1 (332 aa).

8 consecutive transmembrane segments (helical) span residues 11–31 (ILLLALCISGIWSAYIYQGVL), 49–69 (HLAFLNLAQSVVCLIWSYIMI), 80–100 (APWWTYWSAGITNTIGPAMGI), 112–132 (VLAKSSKMIPVMLMGTLVYGI), 135–155 (TFPEYMCTFLVAGGVSIFALL), 206–226 (IMLGMNLWGTIYNMIYMFGLP), 252–272 (ICGAVGQNFIFMTISNFGSLA), and 301–317 (WGCVSMVFGGLAYQIYL). Positions 327-332 (KKKQKS) match the Di-lysine motif motif.

The protein belongs to the nucleotide-sugar transporter family. UDP-galactose:UMP antiporter (TC 2.A.7.11) subfamily.

The protein resides in the endoplasmic reticulum membrane. Its function is as follows. Essential sugar transporter required for the transport of UDP-galactose and UDP-glucose from the cytoplasm into the Golgi and the endoplasmic reticulum, to ensure quality control of protein folding. Essential for pollen development and involved in embryo sac progress. The sequence is that of UDP-galactose/UDP-glucose transporter 1 from Arabidopsis thaliana (Mouse-ear cress).